Here is a 638-residue protein sequence, read N- to C-terminus: CTTNBP2 N-terminal-like protein (638 aa).

Residues 87-284 (MKQCKNMQER…KDLEAAQQHR (198 aa)) adopt a coiled-coil conformation. 4 disordered regions span residues 280–303 (AQQH…TATE), 360–430 (RELT…PCSS), 463–490 (RHKF…LSPT), and 514–621 (NQGP…CSPS). Phosphoserine is present on Ser285. Residues 360–371 (RELTSDSSTENQ) show a composition bias toward polar residues. Composition is skewed to low complexity over residues 401 to 430 (TMPS…PCSS) and 467 to 477 (QSQADQDQQAS). Phosphoserine is present on residues Ser481, Ser488, Ser522, Ser526, Ser559, Ser562, and Ser567. Polar residues predominate over residues 514–528 (NQGPIKPVSPNSSPF). A phosphothreonine mark is found at Thr569 and Thr589. Over residues 589–620 (TPSQSATTPVTKTHSQASSLAATEDLASSCSP) the composition is skewed to polar residues. Position 591 is a phosphoserine (Ser591).

In terms of assembly, interacts with CTTN/cortactin; this interaction may redistribute CTTN to stress fibers. May form homomers. Associates with the core of STRIPAK complexes composed of PP2A catalytic and scaffolding subunits, the striatins (PP2A regulatory subunits), the striatin-associated proteins MOB4, STRIP1 and STRIP2, PDCD10 and members of the STE20 kinases, such as STK24 and STK26. As to expression, predominantly expressed in skin, also detectable in spleen and lung (at protein level). Very low levels, if any, in brain (at protein level).

Its subcellular location is the cell projection. The protein resides in the lamellipodium. The protein localises to the cytoplasm. It is found in the cytoskeleton. It localises to the stress fiber. In terms of biological role, regulates lamellipodial actin dynamics in a CTTN-dependent manner. Associates with core striatin-interacting phosphatase and kinase (STRIPAK) complex to form CTTNBP2NL-STRIPAK complexes. STRIPAK complexes have critical roles in protein (de)phosphorylation and are regulators of multiple signaling pathways including Hippo, MAPK, nuclear receptor and cytoskeleton remodeling. Different types of STRIPAK complexes are involved in a variety of biological processes such as cell growth, differentiation, apoptosis, metabolism and immune regulation. The polypeptide is CTTNBP2 N-terminal-like protein (Cttnbp2nl) (Mus musculus (Mouse)).